We begin with the raw amino-acid sequence, 246 residues long: Biosynthetic peptidoglycan transglycosylase (246 aa).

The chain crosses the membrane as a helical span at residues 20 to 42; sequence WLRWLMAAPLLFAAASVLQVLIL.

This sequence belongs to the glycosyltransferase 51 family.

It localises to the cell inner membrane. The catalysed reaction is [GlcNAc-(1-&gt;4)-Mur2Ac(oyl-L-Ala-gamma-D-Glu-L-Lys-D-Ala-D-Ala)](n)-di-trans,octa-cis-undecaprenyl diphosphate + beta-D-GlcNAc-(1-&gt;4)-Mur2Ac(oyl-L-Ala-gamma-D-Glu-L-Lys-D-Ala-D-Ala)-di-trans,octa-cis-undecaprenyl diphosphate = [GlcNAc-(1-&gt;4)-Mur2Ac(oyl-L-Ala-gamma-D-Glu-L-Lys-D-Ala-D-Ala)](n+1)-di-trans,octa-cis-undecaprenyl diphosphate + di-trans,octa-cis-undecaprenyl diphosphate + H(+). It participates in cell wall biogenesis; peptidoglycan biosynthesis. In terms of biological role, peptidoglycan polymerase that catalyzes glycan chain elongation from lipid-linked precursors. This Xanthomonas axonopodis pv. citri (strain 306) protein is Biosynthetic peptidoglycan transglycosylase.